The sequence spans 218 residues: Adenylate kinase (218 aa).

An ATP-binding site is contributed by 10–15 (GAGKGT). Residues 30 to 59 (STGDMLRAAIAKGTPLGLSAQKIMESGGLV) are NMP. AMP-binding positions include Thr-31, Arg-36, 57-59 (GLV), 85-88 (GFPR), and Gln-92. The tract at residues 122 to 159 (GRRIHQPSGRVYHVVNQPPKNPGVDDITGEPLIQRDDD) is LID. Residues Arg-123 and 132 to 133 (VY) each bind ATP. AMP contacts are provided by Arg-156 and Arg-167. Position 203 (Gly-203) interacts with ATP.

The protein belongs to the adenylate kinase family. In terms of assembly, monomer.

The protein resides in the cytoplasm. It carries out the reaction AMP + ATP = 2 ADP. Its pathway is purine metabolism; AMP biosynthesis via salvage pathway; AMP from ADP: step 1/1. Catalyzes the reversible transfer of the terminal phosphate group between ATP and AMP. Plays an important role in cellular energy homeostasis and in adenine nucleotide metabolism. The polypeptide is Adenylate kinase (Legionella pneumophila (strain Lens)).